We begin with the raw amino-acid sequence, 150 residues long: Phosphoribosyl-AMP cyclohydrolase (150 aa).

Aspartate 93 lines the Mg(2+) pocket. Residue cysteine 94 participates in Zn(2+) binding. Mg(2+)-binding residues include aspartate 95 and aspartate 97. The Zn(2+) site is built by cysteine 112 and cysteine 119.

Belongs to the PRA-CH family. As to quaternary structure, homodimer. Requires Mg(2+) as cofactor. The cofactor is Zn(2+).

The protein localises to the cytoplasm. It catalyses the reaction 1-(5-phospho-beta-D-ribosyl)-5'-AMP + H2O = 1-(5-phospho-beta-D-ribosyl)-5-[(5-phospho-beta-D-ribosylamino)methylideneamino]imidazole-4-carboxamide. Its pathway is amino-acid biosynthesis; L-histidine biosynthesis; L-histidine from 5-phospho-alpha-D-ribose 1-diphosphate: step 3/9. In terms of biological role, catalyzes the hydrolysis of the adenine ring of phosphoribosyl-AMP. The chain is Phosphoribosyl-AMP cyclohydrolase from Rhizobium etli (strain ATCC 51251 / DSM 11541 / JCM 21823 / NBRC 15573 / CFN 42).